Here is a 399-residue protein sequence, read N- to C-terminus: Fructose-bisphosphate aldolase 1, chloroplastic (399 aa).

The transit peptide at 1-48 (MASSTATMLKASPVKSDWVKGQSLLLRQPSSVSAIRSHVAPSALTVRA) directs the protein to the chloroplast. Residue Arg96 participates in substrate binding. Ser158 bears the Phosphoserine mark. Lys186 is a substrate binding site. Ser216 bears the Phosphoserine mark. The active-site Proton acceptor is Glu226. Residue Lys268 is the Schiff-base intermediate with dihydroxyacetone-P of the active site. Residue 310-312 (SGG) coordinates substrate. Lys395 is modified (N6,N6,N6-trimethyllysine).

It belongs to the class I fructose-bisphosphate aldolase family. In terms of assembly, homotetramer. Can be trimethylated at Lys-395 by LSMT-L, but the trimethylation has no effect in vitro on the kinetic properties of the enzyme. In terms of processing, S-glutathionylated. Highly expressed in rosettes leaves and cauline leaves.

It is found in the plastid. The protein localises to the chloroplast. The protein resides in the plastoglobule. Its subcellular location is the chloroplast stroma. The catalysed reaction is beta-D-fructose 1,6-bisphosphate = D-glyceraldehyde 3-phosphate + dihydroxyacetone phosphate. The protein operates within carbohydrate degradation; glycolysis; D-glyceraldehyde 3-phosphate and glycerone phosphate from D-glucose: step 4/4. Its function is as follows. Plays a key role in glycolysis and gluconeogenesis. The sequence is that of Fructose-bisphosphate aldolase 1, chloroplastic from Arabidopsis thaliana (Mouse-ear cress).